Reading from the N-terminus, the 288-residue chain is Diaminopimelate epimerase (288 aa).

Substrate is bound by residues asparagine 13, glutamine 46, and asparagine 66. Cysteine 75 (proton donor) is an active-site residue. Residues 76–77 (GN), asparagine 166, asparagine 199, and 217–218 (ER) contribute to the substrate site. Residue cysteine 226 is the Proton acceptor of the active site. 227–228 (GT) is a substrate binding site.

Belongs to the diaminopimelate epimerase family. As to quaternary structure, homodimer.

It localises to the cytoplasm. It carries out the reaction (2S,6S)-2,6-diaminopimelate = meso-2,6-diaminopimelate. The protein operates within amino-acid biosynthesis; L-lysine biosynthesis via DAP pathway; DL-2,6-diaminopimelate from LL-2,6-diaminopimelate: step 1/1. In terms of biological role, catalyzes the stereoinversion of LL-2,6-diaminopimelate (L,L-DAP) to meso-diaminopimelate (meso-DAP), a precursor of L-lysine and an essential component of the bacterial peptidoglycan. This Cupriavidus pinatubonensis (strain JMP 134 / LMG 1197) (Cupriavidus necator (strain JMP 134)) protein is Diaminopimelate epimerase.